Here is a 141-residue protein sequence, read N- to C-terminus: Small ribosomal subunit protein uS19 (141 aa).

This sequence belongs to the universal ribosomal protein uS19 family.

Protein S19 forms a complex with S13 that binds strongly to the 16S ribosomal RNA. The chain is Small ribosomal subunit protein uS19 from Halorubrum lacusprofundi (strain ATCC 49239 / DSM 5036 / JCM 8891 / ACAM 34).